Here is a 60-residue protein sequence, read N- to C-terminus: Large ribosomal subunit protein bL32 (60 aa).

Belongs to the bacterial ribosomal protein bL32 family.

This is Large ribosomal subunit protein bL32 from Borrelia turicatae (strain 91E135).